The chain runs to 1173 residues: WASH complex subunit 4 (1173 aa).

The residue at position 2 (A2) is an N-acetylalanine. S7 bears the Phosphoserine mark. The stretch at 27-56 (QLKNYGRFLEEYTSQLRRIEDALDDLIGDV) forms a coiled coil. The segment at 705 to 1173 (KDLALFFSLN…STVSADPVVK (469 aa)) is sufficient for interaction with WASHC5. A compositionally biased stretch (basic and acidic residues) spans 1141 to 1155 (AEENQEKKEKEEETK). A disordered region spans residues 1141–1173 (AEENQEKKEKEEETKTSNGDGPESTVSADPVVK). The residue at position 1154 (T1154) is a Phosphothreonine.

It belongs to the SWIP family. As to quaternary structure, component of the WASH core complex also described as WASH regulatory complex (SHRC) composed of WASH (WASHC1, WASH2P or WASH3P), WASHC2 (WASHC2A or WASHC2C), WASHC3, WASHC4 and WASHC5. The WASH core complex associates via WASHC2 with the F-actin-capping protein dimer (formed by CAPZA1, CAPZA2 or CAPZA3 and CAPZB) in a transient or substoichiometric manner which was initially described as WASH complex.

It is found in the early endosome. In terms of biological role, acts as a component of the WASH core complex that functions as a nucleation-promoting factor (NPF) at the surface of endosomes, where it recruits and activates the Arp2/3 complex to induce actin polymerization, playing a key role in the fission of tubules that serve as transport intermediates during endosome sorting. This chain is WASH complex subunit 4, found in Mus musculus (Mouse).